A 428-amino-acid chain; its full sequence is Glucose-1-phosphate adenylyltransferase (428 aa).

Residues Tyr-114, Gly-179, 194–195 (EK), and Ser-212 contribute to the alpha-D-glucose 1-phosphate site.

The protein belongs to the bacterial/plant glucose-1-phosphate adenylyltransferase family. As to quaternary structure, homotetramer.

The catalysed reaction is alpha-D-glucose 1-phosphate + ATP + H(+) = ADP-alpha-D-glucose + diphosphate. Its pathway is glycan biosynthesis; glycogen biosynthesis. In terms of biological role, involved in the biosynthesis of ADP-glucose, a building block required for the elongation reactions to produce glycogen. Catalyzes the reaction between ATP and alpha-D-glucose 1-phosphate (G1P) to produce pyrophosphate and ADP-Glc. The polypeptide is Glucose-1-phosphate adenylyltransferase (Yersinia pseudotuberculosis serotype IB (strain PB1/+)).